The following is an 82-amino-acid chain: ATP synthase subunit c, chloroplastic (82 aa).

2 helical membrane passes run 4–24 (IISA…AIGP) and 57–77 (LAFM…LLFA).

It belongs to the ATPase C chain family. As to quaternary structure, F-type ATPases have 2 components, F(1) - the catalytic core - and F(0) - the membrane proton channel. F(1) has five subunits: alpha(3), beta(3), gamma(1), delta(1), epsilon(1). F(0) has four main subunits: a(1), b(1), b'(1) and c(10-14). The alpha and beta chains form an alternating ring which encloses part of the gamma chain. F(1) is attached to F(0) by a central stalk formed by the gamma and epsilon chains, while a peripheral stalk is formed by the delta, b and b' chains.

It localises to the plastid. The protein localises to the chloroplast thylakoid membrane. F(1)F(0) ATP synthase produces ATP from ADP in the presence of a proton or sodium gradient. F-type ATPases consist of two structural domains, F(1) containing the extramembraneous catalytic core and F(0) containing the membrane proton channel, linked together by a central stalk and a peripheral stalk. During catalysis, ATP synthesis in the catalytic domain of F(1) is coupled via a rotary mechanism of the central stalk subunits to proton translocation. Functionally, key component of the F(0) channel; it plays a direct role in translocation across the membrane. A homomeric c-ring of between 10-14 subunits forms the central stalk rotor element with the F(1) delta and epsilon subunits. This is ATP synthase subunit c, chloroplastic from Trieres chinensis (Marine centric diatom).